Reading from the N-terminus, the 165-residue chain is Thiol peroxidase (165 aa).

One can recognise a Thioredoxin domain in the interval 18-164 (RKVGDKAPNF…YEAAIEAAKK (147 aa)). The active-site Cysteine sulfenic acid (-SOH) intermediate is the cysteine 60. An intrachain disulfide couples cysteine 60 to cysteine 94.

The protein belongs to the peroxiredoxin family. Tpx subfamily. Homodimer.

It carries out the reaction a hydroperoxide + [thioredoxin]-dithiol = an alcohol + [thioredoxin]-disulfide + H2O. Functionally, thiol-specific peroxidase that catalyzes the reduction of hydrogen peroxide and organic hydroperoxides to water and alcohols, respectively. Plays a role in cell protection against oxidative stress by detoxifying peroxides. The protein is Thiol peroxidase of Listeria innocua serovar 6a (strain ATCC BAA-680 / CLIP 11262).